The following is a 288-amino-acid chain: Putative hydrolase LipZ (288 aa).

The protein belongs to the AB hydrolase superfamily.

In Mycobacterium tuberculosis (strain CDC 1551 / Oshkosh), this protein is Putative hydrolase LipZ.